The primary structure comprises 335 residues: Nuclear transcription factor Y subunit gamma (335 aa).

The protein belongs to the NFYC/HAP5 subunit family. As to quaternary structure, heterotrimeric transcription factor composed of three components, NF-YA, NF-YB and NF-YC. NF-YB and NF-YC must interact and dimerize for NF-YA association and DNA binding.

The protein localises to the nucleus. Functionally, component of the sequence-specific heterotrimeric transcription factor (NF-Y) which specifically recognizes a 5'-CCAAT-3' box motif found in the promoters of its target genes. NF-Y can function as both an activator and a repressor, depending on its interacting cofactors. The chain is Nuclear transcription factor Y subunit gamma (NFYC) from Pongo abelii (Sumatran orangutan).